Here is a 429-residue protein sequence, read N- to C-terminus: Histidine--tRNA ligase (429 aa).

The protein belongs to the class-II aminoacyl-tRNA synthetase family. Homodimer.

It is found in the cytoplasm. The catalysed reaction is tRNA(His) + L-histidine + ATP = L-histidyl-tRNA(His) + AMP + diphosphate + H(+). The polypeptide is Histidine--tRNA ligase (Streptococcus pneumoniae serotype 4 (strain ATCC BAA-334 / TIGR4)).